We begin with the raw amino-acid sequence, 360 residues long: MLVYLAEYLTQFYTGFNVFSYVTFRAILGLLTAMVFSLWWGPKMIERLQLLQIGQVVRNEGPESHFAKRGTPTMGGLLILAGVFISVLLWGDLGSRYVWVMLFVLGAFGLIGFIDDYRKVVRKDTKGLIARWKYILQSLAALAIAFYLYASAGSEGETQLVLPFFKDVMPQLGAFFILLAYFTIVGSSNAVNLTDGLDGLAIMPTVMVAAAFALIAYLSGHVQFANYLHIPYLPGSGELVIVCTAIVGAGLGFLWFNTYPAQVFMGDVGSLSLGAALGTIAVLVRQEILLVIMGGVFVMETVSVILQVGSYKLRGQRIFRMAPIHHHYELKGWPEPRVIVRFWIISLFLVLLGLATLKLR.

Transmembrane regions (helical) follow at residues 21–41, 74–94, 97–117, 134–154, 168–188, 199–219, 236–256, 263–283, 288–308, and 338–358; these read YVTF…LWWG, MGGL…GDLG, YVWV…IDDY, YILQ…SAGS, VMPQ…VGSS, GLAI…AYLS, SGEL…FLWF, VFMG…IAVL, ILLV…ILQV, and VIVR…ATLK.

This sequence belongs to the glycosyltransferase 4 family. MraY subfamily. Requires Mg(2+) as cofactor.

Its subcellular location is the cell inner membrane. The catalysed reaction is UDP-N-acetyl-alpha-D-muramoyl-L-alanyl-gamma-D-glutamyl-meso-2,6-diaminopimeloyl-D-alanyl-D-alanine + di-trans,octa-cis-undecaprenyl phosphate = di-trans,octa-cis-undecaprenyl diphospho-N-acetyl-alpha-D-muramoyl-L-alanyl-D-glutamyl-meso-2,6-diaminopimeloyl-D-alanyl-D-alanine + UMP. It functions in the pathway cell wall biogenesis; peptidoglycan biosynthesis. Catalyzes the initial step of the lipid cycle reactions in the biosynthesis of the cell wall peptidoglycan: transfers peptidoglycan precursor phospho-MurNAc-pentapeptide from UDP-MurNAc-pentapeptide onto the lipid carrier undecaprenyl phosphate, yielding undecaprenyl-pyrophosphoryl-MurNAc-pentapeptide, known as lipid I. The chain is Phospho-N-acetylmuramoyl-pentapeptide-transferase from Shewanella loihica (strain ATCC BAA-1088 / PV-4).